The following is a 343-amino-acid chain: Aspartate carbamoyltransferase catalytic subunit (343 aa).

The carbamoyl phosphate site is built by Arg-54 and Thr-55. Residue Lys-82 participates in L-aspartate binding. Carbamoyl phosphate contacts are provided by Arg-104, His-134, and Gln-137. Positions 177 and 232 each coordinate L-aspartate. Residues Gly-277 and Pro-278 each contribute to the carbamoyl phosphate site. The disordered stretch occupies residues 323–343; it reads PDQSNPQRNVTNTSNWQETKR.

Belongs to the aspartate/ornithine carbamoyltransferase superfamily. ATCase family. As to quaternary structure, heterododecamer (2C3:3R2) of six catalytic PyrB chains organized as two trimers (C3), and six regulatory PyrI chains organized as three dimers (R2).

It carries out the reaction carbamoyl phosphate + L-aspartate = N-carbamoyl-L-aspartate + phosphate + H(+). It participates in pyrimidine metabolism; UMP biosynthesis via de novo pathway; (S)-dihydroorotate from bicarbonate: step 2/3. Catalyzes the condensation of carbamoyl phosphate and aspartate to form carbamoyl aspartate and inorganic phosphate, the committed step in the de novo pyrimidine nucleotide biosynthesis pathway. This Renibacterium salmoninarum (strain ATCC 33209 / DSM 20767 / JCM 11484 / NBRC 15589 / NCIMB 2235) protein is Aspartate carbamoyltransferase catalytic subunit.